The chain runs to 1263 residues: Topoisomerase 1-associated factor 1 (1263 aa).

2 disordered regions span residues 1042-1098 (ERQL…DDSQ) and 1178-1263 (VEES…DEEE). Over residues 1060-1071 (TKGKARKKSKEK) the composition is skewed to basic residues. A compositionally biased stretch (acidic residues) spans 1179 to 1189 (EESDNDDEVEE). Over residues 1211-1226 (VDTQQDLSDNTSNTSD) the composition is skewed to polar residues.

It belongs to the timeless family. Component of the fork protection complex (FPC) consisting of TOF1 and CSM3.

The protein localises to the nucleus. In terms of biological role, forms a fork protection complex (FPC) with CSM3 and which is required for chromosome segregation during meiosis and DNA damage repair. FPC coordinates leading and lagging strand synthesis and moves with the replication fork. FPC stabilizes replication forks in a configuration that is recognized by replication checkpoint sensors. In Candida albicans (strain SC5314 / ATCC MYA-2876) (Yeast), this protein is Topoisomerase 1-associated factor 1 (YBL053).